The chain runs to 105 residues: V-type ATP synthase subunit F (105 aa).

This sequence belongs to the V-ATPase F subunit family.

Functionally, produces ATP from ADP in the presence of a proton gradient across the membrane. This chain is V-type ATP synthase subunit F, found in Fusobacterium nucleatum subsp. nucleatum (strain ATCC 25586 / DSM 15643 / BCRC 10681 / CIP 101130 / JCM 8532 / KCTC 2640 / LMG 13131 / VPI 4355).